The chain runs to 1416 residues: Phospholipid-transporting ATPase VD (1416 aa).

Over Met-1 to Arg-97 the chain is Cytoplasmic. Residues Ala-98–Phe-118 traverse the membrane as a helical segment. Residues Gln-119–Lys-120 lie on the Exoplasmic loop side of the membrane. A helical transmembrane segment spans residues Glu-121–Glu-141. Residues Asp-142–Asp-321 are Cytoplasmic-facing. Residues Val-322 to Ile-342 traverse the membrane as a helical segment. Residues Trp-343 to Pro-365 are Exoplasmic loop-facing. Residues Val-366–Ile-386 traverse the membrane as a helical segment. At Ser-387–Met-1110 the chain is on the cytoplasmic side. The 4-aspartylphosphate intermediate role is filled by Asp-438. ATP contacts are provided by Asp-438, Lys-439, and Thr-440. Asp-438 contacts Mg(2+). Thr-440 contacts Mg(2+). The segment at Ala-498–Met-544 is disordered. Over residues Ala-514–Val-523 the composition is skewed to polar residues. The ATP site is built by Glu-729, Phe-771, Lys-795, Arg-838, Thr-918, Gly-919, and Asp-920. The interval Pro-971–Gly-990 is disordered. Positions Ser-976 to Gln-987 are enriched in polar residues. ATP is bound by residues Gly-993–Thr-1000, Arg-1027, and Lys-1033. Asp-1053 is a binding site for Mg(2+). Residues Asn-1056 and Asp-1057 each contribute to the ATP site. Asp-1057 contacts Mg(2+). Residues Ile-1111–Phe-1131 form a helical membrane-spanning segment. At Cys-1132 to Tyr-1142 the chain is on the exoplasmic loop side. A helical transmembrane segment spans residues Trp-1143–Leu-1163. Residues Glu-1164–Thr-1192 are Cytoplasmic-facing. A helical transmembrane segment spans residues Phe-1193 to Phe-1213. At Thr-1214–Asp-1221 the chain is on the exoplasmic loop side. Residues Ile-1222 to Val-1242 form a helical membrane-spanning segment. The Cytoplasmic segment spans residues Ile-1243–His-1252. A helical transmembrane segment spans residues Met-1253 to Leu-1273. The Exoplasmic loop segment spans residues Cys-1274–Lys-1289. The helical transmembrane segment at His-1290–Pro-1310 threads the bilayer. Residues Arg-1311–Ser-1416 lie on the Cytoplasmic side of the membrane. The disordered stretch occupies residues Ser-1358–Ser-1416. Position 1361 to 1368 (Ala-1361 to Ser-1368) interacts with ATP. The segment covering Ser-1392 to Cys-1402 has biased composition (basic and acidic residues).

This sequence belongs to the cation transport ATPase (P-type) (TC 3.A.3) family. Type IV subfamily. As to quaternary structure, component of a P4-ATPase flippase complex which consists of a catalytic alpha subunit ATP10A and an accessory beta subunit TMEM30A. Requires Mg(2+) as cofactor. In terms of processing, autophosphorylated at the conserved aspartate of the P-type ATPase signature sequence. In terms of tissue distribution, expressed at low amounts in liver, brain, testes, and kidney (at protein level). Expressed in placenta.

It localises to the cell membrane. The protein localises to the endoplasmic reticulum membrane. The enzyme catalyses ATP + H2O + phospholipidSide 1 = ADP + phosphate + phospholipidSide 2.. It catalyses the reaction a beta-D-glucosyl-(1&lt;-&gt;1')-N-acylsphing-4-enine(out) + ATP + H2O = a beta-D-glucosyl-(1&lt;-&gt;1')-N-acylsphing-4-enine(in) + ADP + phosphate + H(+). Functionally, catalytic component of a P4-ATPase flippase complex, which catalyzes the hydrolysis of ATP coupled to the transport of glucosylceramide (GlcCer) from the outer to the inner leaflet of the plasma membrane. This chain is Phospholipid-transporting ATPase VD (Atp10d), found in Mus musculus (Mouse).